The sequence spans 202 residues: LexA repressor (202 aa).

Positions 28–48 form a DNA-binding region, H-T-H motif; the sequence is RAEIAQRLGFRSPNAAEEHLK. Residues S119 and K156 each act as for autocatalytic cleavage activity in the active site.

The protein belongs to the peptidase S24 family. As to quaternary structure, homodimer.

It catalyses the reaction Hydrolysis of Ala-|-Gly bond in repressor LexA.. Its function is as follows. Represses a number of genes involved in the response to DNA damage (SOS response), including recA and lexA. Binds to the 16 bp palindromic sequence 5'-CTGTATATATATACAG-3'. In the presence of single-stranded DNA, RecA interacts with LexA causing an autocatalytic cleavage which disrupts the DNA-binding part of LexA, leading to derepression of the SOS regulon and eventually DNA repair. The protein is LexA repressor of Cronobacter sakazakii (strain ATCC BAA-894) (Enterobacter sakazakii).